The chain runs to 237 residues: Ribosomal RNA small subunit methyltransferase G (237 aa).

S-adenosyl-L-methionine-binding positions include Gly78, Phe83, 129–130 (AE), and Arg148.

This sequence belongs to the methyltransferase superfamily. RNA methyltransferase RsmG family.

The protein localises to the cytoplasm. Its function is as follows. Specifically methylates the N7 position of a guanine in 16S rRNA. The chain is Ribosomal RNA small subunit methyltransferase G from Streptococcus pyogenes serotype M1.